The sequence spans 132 residues: Phosphomevalonate dehydratase small subunit (132 aa).

Ser61 serves as the catalytic Proton acceptor.

Belongs to the AcnX type II small subunit family. Heterodimer composed of a large subunit (PMDh-L) and a small subunit (PMDh-S).

It catalyses the reaction (R)-5-phosphomevalonate = (2E)-3-methyl-5-phosphooxypent-2-enoate + H2O. It functions in the pathway isoprenoid biosynthesis; isopentenyl diphosphate biosynthesis via mevalonate pathway. Functionally, component of a hydro-lyase that catalyzes the dehydration of mevalonate 5-phosphate (MVA5P) to form trans-anhydromevalonate 5-phosphate (tAHMP). Involved in the archaeal mevalonate (MVA) pathway, which provides fundamental precursors for isoprenoid biosynthesis, such as isopentenyl diphosphate (IPP) and dimethylallyl diphosphate (DMAPP). The sequence is that of Phosphomevalonate dehydratase small subunit from Archaeoglobus fulgidus (strain ATCC 49558 / DSM 4304 / JCM 9628 / NBRC 100126 / VC-16).